The primary structure comprises 183 residues: Regulatory protein RecX (183 aa).

Residues 1 to 12 show a composition bias toward polar residues; sequence MTSFPHPSTSES. Residues 1-26 form a disordered region; sequence MTSFPHPSTSESGPDPDSEPNREEQA.

It belongs to the RecX family.

The protein localises to the cytoplasm. Modulates RecA activity. The polypeptide is Regulatory protein RecX (Mycobacterium sp. (strain KMS)).